The chain runs to 335 residues: Teichoic acids export ATP-binding protein TagH (335 aa).

Residues 26–246 enclose the ABC transporter domain; the sequence is IKGLFMPKSQ…YDEFVKWFNK (221 aa). ATP is bound at residue 60–67; the sequence is GINGSGKS.

The protein belongs to the ABC transporter superfamily. Teichoic acids exporter (TC 3.A.1.104.1) family. The complex is composed of two ATP-binding proteins (TagH) and two transmembrane proteins (TagG).

It localises to the cell membrane. It catalyses the reaction ATP + H2O + teichoic acidSide 1 = ADP + phosphate + teichoic acidSide 2.. Functionally, part of the ABC transporter complex TagGH involved in teichoic acids export. Responsible for energy coupling to the transport system. This Listeria monocytogenes serotype 4b (strain F2365) protein is Teichoic acids export ATP-binding protein TagH.